The primary structure comprises 398 residues: Phosphoglycerate kinase (398 aa).

Residues 23 to 25 (DFN), Arg-38, 61 to 64 (HLGK), Arg-122, and Arg-155 contribute to the substrate site. ATP is bound by residues Lys-206, Gly-297, Glu-328, and 354-357 (GGDS).

Belongs to the phosphoglycerate kinase family. Monomer.

The protein localises to the cytoplasm. The enzyme catalyses (2R)-3-phosphoglycerate + ATP = (2R)-3-phospho-glyceroyl phosphate + ADP. Its pathway is carbohydrate degradation; glycolysis; pyruvate from D-glyceraldehyde 3-phosphate: step 2/5. This Clostridium novyi (strain NT) protein is Phosphoglycerate kinase.